Reading from the N-terminus, the 330-residue chain is tRNA N6-adenosine threonylcarbamoyltransferase (330 aa).

The Fe cation site is built by His-110 and His-114. Residues Met-133–Gly-137, Asp-166, Gly-179, Asp-183, and Asn-271 each bind substrate. A Fe cation-binding site is contributed by Asp-299.

It belongs to the KAE1 / TsaD family. Fe(2+) serves as cofactor.

It localises to the cytoplasm. It carries out the reaction L-threonylcarbamoyladenylate + adenosine(37) in tRNA = N(6)-L-threonylcarbamoyladenosine(37) in tRNA + AMP + H(+). Its function is as follows. Required for the formation of a threonylcarbamoyl group on adenosine at position 37 (t(6)A37) in tRNAs that read codons beginning with adenine. Is involved in the transfer of the threonylcarbamoyl moiety of threonylcarbamoyl-AMP (TC-AMP) to the N6 group of A37, together with TsaE and TsaB. TsaD likely plays a direct catalytic role in this reaction. The polypeptide is tRNA N6-adenosine threonylcarbamoyltransferase (Thermosipho africanus (strain TCF52B)).